A 317-amino-acid chain; its full sequence is tRNA dimethylallyltransferase (317 aa).

Position 14–21 (14–21 (GPTASGKS)) interacts with ATP. 16 to 21 (TASGKS) contacts substrate. 2 interaction with substrate tRNA regions span residues 39–42 (DSVL) and 163–167 (QRIQR).

Belongs to the IPP transferase family. As to quaternary structure, monomer. The cofactor is Mg(2+).

The enzyme catalyses adenosine(37) in tRNA + dimethylallyl diphosphate = N(6)-dimethylallyladenosine(37) in tRNA + diphosphate. In terms of biological role, catalyzes the transfer of a dimethylallyl group onto the adenine at position 37 in tRNAs that read codons beginning with uridine, leading to the formation of N6-(dimethylallyl)adenosine (i(6)A). In Xylella fastidiosa (strain M23), this protein is tRNA dimethylallyltransferase.